A 454-amino-acid chain; its full sequence is Divalent metal cation transporter MntH (454 aa).

The tract at residues 1–21 is disordered; that stretch reads MSDAEATAPRSSWRFAGRDED. A run of 11 helical transmembrane segments spans residues 45-65, 78-98, 122-142, 153-173, 182-202, 220-240, 275-295, 312-332, 368-388, 389-409, and 426-446; these read LFAF…PGNW, TLLF…ALAA, FVLW…EVIG, IPLI…LLLM, AFVI…IFVA, IVTN…TVMP, IALM…AVAF, LLSP…ALLA, GLAI…GTGQ, LLVF…VPLV, and GVAA…FKLL.

This sequence belongs to the NRAMP family.

The protein localises to the cell inner membrane. H(+)-stimulated, divalent metal cation uptake system. This chain is Divalent metal cation transporter MntH, found in Mesorhizobium japonicum (strain LMG 29417 / CECT 9101 / MAFF 303099) (Mesorhizobium loti (strain MAFF 303099)).